Reading from the N-terminus, the 265-residue chain is Isoprenyl transferase 1 (265 aa).

Aspartate 43 is an active-site residue. Aspartate 43 serves as a coordination point for Mg(2+). Substrate is bound by residues 44–47 (GNRR), tryptophan 48, histidine 61, and 89–91 (STE). Residue asparagine 92 is the Proton acceptor of the active site. Residues arginine 95, arginine 214, and 220–222 (RLS) contribute to the substrate site. Glutamate 233 lines the Mg(2+) pocket.

It belongs to the UPP synthase family. As to quaternary structure, homodimer. It depends on Mg(2+) as a cofactor.

In terms of biological role, catalyzes the condensation of isopentenyl diphosphate (IPP) with allylic pyrophosphates generating different type of terpenoids. This chain is Isoprenyl transferase 1, found in Corynebacterium diphtheriae (strain ATCC 700971 / NCTC 13129 / Biotype gravis).